The following is a 173-amino-acid chain: Alpha-crystallin A chain (173 aa).

Position 1 is an N-acetylmethionine (Met-1). A required for complex formation with BFSP1 and BFSP2 region spans residues 1 to 63 (MDVTIQHPWF…RTVLDSGISE (63 aa)). A Deamidated glutamine; partial modification is found at Gln-6. Phosphoserine is present on Ser-45. Gln-50 carries the deamidated glutamine; partial modification. The sHSP domain maps to 52–162 (LFRTVLDSGI…GPSERAIPVS (111 aa)). N6-acetyllysine occurs at positions 70 and 99. Residues His-100, Glu-102, and His-107 each coordinate Zn(2+). The tract at residues 145–173 (KVASGLDAGPSERAIPVSREEKPSSAPSS) is disordered. O-linked (GlcNAc) serine glycosylation is present at Ser-162.

This sequence belongs to the small heat shock protein (HSP20) family. Heteromer composed of three CRYAA and one CRYAB subunits. Zinc coordination is achieved at least by His-100, Glu-102 and His-107. His-100 and Glu-102 come from the same molecule within the oligomer, while His-107 residue is provided by another molecule. Inter-subunit bridging via zinc ions enhances stability, which is crucial as there is no protein turn over in the lens. Can also form homodimers and homotetramers (dimers of dimers) which serve as the building blocks of homooligomers. Part of a complex required for lens intermediate filament formation composed of BFSP1, BFSP2 and CRYAA. Acetylation at Lys-70 may increase chaperone activity. In terms of processing, undergoes age-dependent proteolytical cleavage at the C-terminus.

It localises to the cytoplasm. Its subcellular location is the nucleus. In terms of biological role, contributes to the transparency and refractive index of the lens. Acts as a chaperone, preventing aggregation of various proteins under a wide range of stress conditions. Required for the correct formation of lens intermediate filaments as part of a complex composed of BFSP1, BFSP2 and CRYAA. The chain is Alpha-crystallin A chain (CRYAA) from Erinaceus europaeus (Western European hedgehog).